Consider the following 380-residue polypeptide: DNA replication and repair protein RecF (380 aa).

Residue 30–37 (GENAQGKT) participates in ATP binding.

The protein belongs to the RecF family.

It is found in the cytoplasm. Its function is as follows. The RecF protein is involved in DNA metabolism; it is required for DNA replication and normal SOS inducibility. RecF binds preferentially to single-stranded, linear DNA. It also seems to bind ATP. In Synechococcus sp. (strain JA-2-3B'a(2-13)) (Cyanobacteria bacterium Yellowstone B-Prime), this protein is DNA replication and repair protein RecF.